We begin with the raw amino-acid sequence, 881 residues long: Lon protease (881 aa).

Basic and acidic residues predominate over residues 1-24; that stretch reads MAKNTDIEHDAHEPAGHGDVRESA. The segment at 1–77 is disordered; it reads MAKNTDIEHD…RAGEAEKGVP (77 aa). Polar residues predominate over residues 49–59; sequence QTDTESAQGAA. Positions 65 to 77 are enriched in basic and acidic residues; sequence EVQRAGEAEKGVP. A Lon N-terminal domain is found at 94 to 287; that stretch reads VHLIPLTGRP…EVFVYIKKEK (194 aa). 440–447 provides a ligand contact to ATP; sequence GPPGVGKT. The Lon proteolytic domain occupies 679 to 861; sequence ANKVGTAVGL…EEVLSLAFPK (183 aa). Active-site residues include Ser767 and Lys810.

The protein belongs to the peptidase S16 family. Homohexamer. Organized in a ring with a central cavity.

The protein localises to the cytoplasm. The catalysed reaction is Hydrolysis of proteins in presence of ATP.. Its function is as follows. ATP-dependent serine protease that mediates the selective degradation of mutant and abnormal proteins as well as certain short-lived regulatory proteins. Required for cellular homeostasis and for survival from DNA damage and developmental changes induced by stress. Degrades polypeptides processively to yield small peptide fragments that are 5 to 10 amino acids long. Binds to DNA in a double-stranded, site-specific manner. The polypeptide is Lon protease (Treponema pallidum (strain Nichols)).